A 278-amino-acid polypeptide reads, in one-letter code: 3-oxoacyl-[acyl-carrier-protein] reductase (278 aa).

Positions 13, 14, 16, 36, 40, 44, 66, 67, 77, 122, 125, and 126 each coordinate NADP(+). Ser182 serves as the catalytic Proton donor. NADP(+) contacts are provided by Tyr198, Lys202, Leu230, and Val231. The active-site Proton acceptor is the Tyr198. Lys202 functions as the Lowers pKa of active site Tyr in the catalytic mechanism.

Belongs to the short-chain dehydrogenases/reductases (SDR) family.

It localises to the mitochondrion. The enzyme catalyses a (3R)-hydroxyacyl-[ACP] + NADP(+) = a 3-oxoacyl-[ACP] + NADPH + H(+). It functions in the pathway lipid metabolism; fatty acid biosynthesis. Its function is as follows. Involved in biosynthesis of fatty acids in mitochondria. The protein is 3-oxoacyl-[acyl-carrier-protein] reductase (OAR1) of Saccharomyces cerevisiae (strain ATCC 204508 / S288c) (Baker's yeast).